Here is a 726-residue protein sequence, read N- to C-terminus: MAGAIRVTMEVGADGVAVVTICNPPVNALHPIIIQGLKEKYAEAMDRDDVKAIVLTGAGGKFCGGFDINVFTEVHKTGNVSLMPDVSVELVSNLMEAGKKPSVAAIQGLALGGGLELTMGCHARISTPEAQLGLPELTLGIIPGFGGTQRLPRLVGLPKAIEMMLQSKFITAKEGKEGGLVDALCSPDELIKMSRLWALEIANYRKPWIRSLARTDRLGSLSEARSVLNSARQQAKKVAANLPQHQACLDVMEEGVLCGGHAGVLKEAKVFKELVLSPTSKALVHAFFAQRLTTKVPGVTDVQLKPRKIRKVAVIGGGLMGSGIATALLVSNTSVVLKEVNPQFLQRGQKMIAANLEGLVKRGSLTKDKMNKAMSLLKGALDYSDFKDVDMVIEAVIEKIPLKQSIFSDLEKVCPPHCILATNTSTIDLNVVGEKTNSQDRIIGAHFFSPAHIMPLLEIVRTEKTSPQAILDLITVGKMIKKVPVVVGNCTGFAVNRTFFPYTQGSHLLVSIGIDVFRIDRVISSFGMPMGPFQLQDLAGYGVALAVKDIYAAAFGTRNLDSNLVDLMVQNGRQGKSNGKGYYLYEKGGKPKPDPSVQVVIDEYRRCAKTMPGGKPVTLSDQDILEMIFFPVVNEACRVMDENVVIRASDLDIASILGMGFPKFRGGLVFWADTIGAPYIHSKLSKWTEIYGDFFKPSSYLEDRAKRSLPLSAPNATQQASSRSRM.

It in the N-terminal section; belongs to the enoyl-CoA hydratase/isomerase family. In the central section; belongs to the 3-hydroxyacyl-CoA dehydrogenase family. As to quaternary structure, monomer.

The protein localises to the peroxisome. Its subcellular location is the cytoplasm. The protein resides in the cytoskeleton. It carries out the reaction a (3S)-3-hydroxyacyl-CoA = a (2E)-enoyl-CoA + H2O. It catalyses the reaction a 4-saturated-(3S)-3-hydroxyacyl-CoA = a (3E)-enoyl-CoA + H2O. The catalysed reaction is a (3Z)-enoyl-CoA = a 4-saturated (2E)-enoyl-CoA. The enzyme catalyses a (3E)-enoyl-CoA = a 4-saturated (2E)-enoyl-CoA. It carries out the reaction (3S)-3-hydroxybutanoyl-CoA = (3R)-3-hydroxybutanoyl-CoA. It catalyses the reaction a (3S)-3-hydroxyacyl-CoA + NAD(+) = a 3-oxoacyl-CoA + NADH + H(+). Its pathway is lipid metabolism; fatty acid beta-oxidation. Multifunctional enzyme involved in fatty acid beta-oxidation. Also binds to RNA and microtubules. Possible role in subcellular mRNA localization and RNA-cytoskeleton interactions. The chain is Peroxisomal fatty acid beta-oxidation multifunctional protein (MFP) from Oryza sativa subsp. japonica (Rice).